The following is a 1065-amino-acid chain: Valine--tRNA ligase, mitochondrial (1065 aa).

Residues 1-15 (MPHLPLASFRPPLWG) constitute a mitochondrion transit peptide. Residues 27–52 (ALCTQPEPHGSPVSRRNREAKQKRLR) form a disordered region. A compositionally biased stretch (basic and acidic residues) spans 42-52 (RNREAKQKRLR). Positions 146-156 (PNVTGSLHIGH) match the 'HIGH' region motif. The short motif at 659–663 (KMSKS) is the 'KMSKS' region element. Residue lysine 662 coordinates ATP.

Belongs to the class-I aminoacyl-tRNA synthetase family.

The protein localises to the mitochondrion. It catalyses the reaction tRNA(Val) + L-valine + ATP = L-valyl-tRNA(Val) + AMP + diphosphate. In terms of biological role, catalyzes the attachment of valine to tRNA(Val) in a two-step reaction: valine is first activated by ATP to form Val-AMP and then transferred to the acceptor end of tRNA(Val). The sequence is that of Valine--tRNA ligase, mitochondrial (Vars2) from Rattus norvegicus (Rat).